Here is a 409-residue protein sequence, read N- to C-terminus: Secreted LysM effector Blys2 (409 aa).

A signal peptide spans 1-20 (MTRFTTTLVAALAGANLAAA). Residues 24–71 (YKWRAHAGDTCDSLSSDWSVQVSDFIKWNPSVGANCSNGVTAGQEYCV) enclose the LysM 1 domain. N-linked (GlcNAc...) asparagine glycosylation is present at Asn-58. The disordered stretch occupies residues 74-111 (NGAGSKPTTPPTGSPTTLTTAVTTASSTPTQPTDGAPS). The segment covering 87 to 106 (SPTTLTTAVTTASSTPTQPT) has biased composition (low complexity). LysM domains follow at residues 129–176 (AWYK…YVCV), 206–253 (KWYK…FVCV), 283–330 (KFYK…YYCI), and 357–405 (KYYK…YICV).

Belongs to the secreted LysM effector family.

Its subcellular location is the secreted. The protein localises to the cell wall. Functionally, secreted effector that enables the plant pathogenic fungus to manipulate host defenses for successful infection. Required for the full virulence to infect insect hosts. In contrast to Blys5, Blys2 is not able to protect fungal hyphae against the hydrolytic activity of chitinase but plays an important role in evasion of insect immunities. Binds chitin. Coats and protects the cell walls of insect pathogens from host cell recognition. The chain is Secreted LysM effector Blys2 from Beauveria bassiana (strain ARSEF 2860) (White muscardine disease fungus).